We begin with the raw amino-acid sequence, 141 residues long: Large ribosomal subunit protein uL11 (141 aa).

The protein belongs to the universal ribosomal protein uL11 family. As to quaternary structure, part of the ribosomal stalk of the 50S ribosomal subunit. Interacts with L10 and the large rRNA to form the base of the stalk. L10 forms an elongated spine to which L12 dimers bind in a sequential fashion forming a multimeric L10(L12)X complex. Post-translationally, one or more lysine residues are methylated.

Functionally, forms part of the ribosomal stalk which helps the ribosome interact with GTP-bound translation factors. This Natranaerobius thermophilus (strain ATCC BAA-1301 / DSM 18059 / JW/NM-WN-LF) protein is Large ribosomal subunit protein uL11.